A 76-amino-acid chain; its full sequence is ATP synthase subunit 9, mitochondrial (76 aa).

2 helical membrane-spanning segments follow: residues 14 to 34 (IATL…VALI) and 52 to 72 (ILGF…SFLL).

This sequence belongs to the ATPase C chain family. In terms of assembly, F-type ATPases have 2 components, CF(1) - the catalytic core - and CF(0) - the membrane proton channel. CF(1) has five subunits: alpha(3), beta(3), gamma(1), delta(1), epsilon(1). CF(0) has three main subunits: a, b and c.

Its subcellular location is the mitochondrion membrane. Its function is as follows. Mitochondrial membrane ATP synthase (F(1)F(0) ATP synthase or Complex V) produces ATP from ADP in the presence of a proton gradient across the membrane which is generated by electron transport complexes of the respiratory chain. F-type ATPases consist of two structural domains, F(1) - containing the extramembraneous catalytic core and F(0) - containing the membrane proton channel, linked together by a central stalk and a peripheral stalk. During catalysis, ATP synthesis in the catalytic domain of F(1) is coupled via a rotary mechanism of the central stalk subunits to proton translocation. Part of the complex F(0) domain. A homomeric c-ring of probably 10 subunits is part of the complex rotary element. The sequence is that of ATP synthase subunit 9, mitochondrial (ATP9) from Candida albicans (strain SC5314 / ATCC MYA-2876) (Yeast).